The chain runs to 366 residues: MSEVIPSSEYGRLLLENRPLIDVRAPIEFTKGAFGHSINLPLMQDGEREKVGTCYKKRGQEAAIALGHELVKGKVKQQRIDAWLAQLSQHPDSYLYCFRGGLRSKLSQQWIKESGMDIPYIEGGYKAIRSFLINTIEQAPSQSKVLILSGITGSGKTEVIHQRDESVDLEGLANHKGSSFGKNIDPQPSQINFENNLAVALLKHQQQQHNHLLLEDESMLIGRSALPKHFYSAMQQADIIVLDEPLDARLPRLLNDYVEQKLTDYVSGLGEQAGFDAFKAYLAQSLLGIRKRLGGKQHQELQDLVDNALNVQQSQNDTSKHLDWINLLLDIYYDPMYLYQLEKKQDRVIFQGDRQAIHQWLDKHKS.

In terms of domain architecture, Rhodanese spans leucine 14–glutamate 137. Cysteine 97 serves as the catalytic S-selanylcysteine intermediate.

It belongs to the SelU family. In terms of assembly, monomer.

The catalysed reaction is 5-methylaminomethyl-2-thiouridine(34) in tRNA + selenophosphate + (2E)-geranyl diphosphate + H2O + H(+) = 5-methylaminomethyl-2-selenouridine(34) in tRNA + (2E)-thiogeraniol + phosphate + diphosphate. The enzyme catalyses 5-methylaminomethyl-2-thiouridine(34) in tRNA + (2E)-geranyl diphosphate = 5-methylaminomethyl-S-(2E)-geranyl-thiouridine(34) in tRNA + diphosphate. It carries out the reaction 5-methylaminomethyl-S-(2E)-geranyl-thiouridine(34) in tRNA + selenophosphate + H(+) = 5-methylaminomethyl-2-(Se-phospho)selenouridine(34) in tRNA + (2E)-thiogeraniol. It catalyses the reaction 5-methylaminomethyl-2-(Se-phospho)selenouridine(34) in tRNA + H2O = 5-methylaminomethyl-2-selenouridine(34) in tRNA + phosphate. Its function is as follows. Involved in the post-transcriptional modification of the uridine at the wobble position (U34) of tRNA(Lys), tRNA(Glu) and tRNA(Gln). Catalyzes the conversion of 2-thiouridine (S2U-RNA) to 2-selenouridine (Se2U-RNA). Acts in a two-step process involving geranylation of 2-thiouridine (S2U) to S-geranyl-2-thiouridine (geS2U) and subsequent selenation of the latter derivative to 2-selenouridine (Se2U) in the tRNA chain. The protein is tRNA 2-selenouridine synthase of Shewanella frigidimarina (strain NCIMB 400).